A 660-amino-acid polypeptide reads, in one-letter code: uncharacterized protein (660 aa).

The interval 1-660 (MGTPCQSARG…RNPGCPRTWR (660 aa)) is disordered. Over residues 67-80 (RPGGGNRVGAGRGR) the composition is skewed to gly residues. Residues 104–116 (SNPTGGCSDPQRS) show a composition bias toward polar residues. 4 tandem repeats follow at residues 149 to 273 (SARN…GCPR), 274 to 398 (SARN…GCPR), 399 to 523 (SARN…GCPR), and 524 to 648 (SARN…GCPR). A 4 X 125 AA tandem repeats region spans residues 149-648 (SARNPGCPRT…THRRPPGCPR (500 aa)). 4 stretches are compositionally biased toward low complexity: residues 177–196 (RPSGPTGGRPAAPGAPGTPA), 302–321 (RPSGPTGGRPAAPGAPGTPA), 427–446 (RPSGPTGGRPAAPGAPGTPA), and 552–571 (RPSGPTGGRPAAPGAPGTPA).

This is an uncharacterized protein from Homo sapiens (Human).